A 514-amino-acid polypeptide reads, in one-letter code: MKKLKINYLFIGILTLLLAAALWPSIPWFGKTENHIAAIQARGVLRVSTIDSPLTYSVINGKKYGLDYELAQQFANYLGVKLKVTVRQNISQLFDDLDNGNADLLAAGLVYDSARVKNYQPGPMYYSVSQQLVYRVGQYRPRSLATVNENQLTIAPGHVVVNDLQRLKETKFPDLSWKVDDKKGSTTLLEEVISGKLDYTIADSVAISLFQRVHPELAVALDVTDEQPVTWFSRLDDDNTLSAALLDFFNSINEDGSLARIEEKYLGHGDDFDYVDTRSFLRAVDNVLPELEPLFKKYAKEIDWRLLAAISYQESHWDPLATSPTGVRGLMMLTKNTAQSLGLTDRTDAEQSISGGARYLEDMMAKVPETVPEDERIWFALAAYNMGYAHMLDARSLTVKTKGNPDSWTDVKQRLPLLSQKPYYSKLTYGYARGHEAYAYVENIRKYQISLVGYLQEKEKQEAEAMKLAQDYPAVSPEELNKAPFPFLSFLSQSSGYLTHSPSLLFTPQKKEEK.

A signal peptide spans 1–30 (MKKLKINYLFIGILTLLLAAALWPSIPWFG). The interval 31 to 269 (KTENHIAAIQ…RIEEKYLGHG (239 aa)) is non-LT domain. The segment at 270-514 (DDFDYVDTRS…LFTPQKKEEK (245 aa)) is LT domain. Residue Glu314 is part of the active site.

The protein in the N-terminal section; belongs to the bacterial solute-binding protein 3 family. It in the C-terminal section; belongs to the transglycosylase Slt family.

It is found in the cell outer membrane. The catalysed reaction is Exolytic cleavage of the (1-&gt;4)-beta-glycosidic linkage between N-acetylmuramic acid (MurNAc) and N-acetylglucosamine (GlcNAc) residues in peptidoglycan, from either the reducing or the non-reducing ends of the peptidoglycan chains, with concomitant formation of a 1,6-anhydrobond in the MurNAc residue.. In terms of biological role, murein-degrading enzyme that degrades murein glycan strands and insoluble, high-molecular weight murein sacculi, with the concomitant formation of a 1,6-anhydromuramoyl product. Lytic transglycosylases (LTs) play an integral role in the metabolism of the peptidoglycan (PG) sacculus. Their lytic action creates space within the PG sacculus to allow for its expansion as well as for the insertion of various structures such as secretion systems and flagella. The protein is Membrane-bound lytic murein transglycosylase F of Salmonella typhimurium (strain LT2 / SGSC1412 / ATCC 700720).